A 559-amino-acid polypeptide reads, in one-letter code: Membrane protein insertase YidC (559 aa).

The chain crosses the membrane as a helical span at residues 7–24 (ILWVIFSMSLVLLYDNWQ). Low complexity-rich tracts occupy residues 45–55 (APAASGAAAQG) and 63–82 (QPATGTSAAPAAGAAPQAAA). The interval 45 to 82 (APAASGAAAQGDVPKANVQPATGTSAAPAAGAAPQAAA) is disordered. A run of 5 helical transmembrane segments spans residues 338–358 (LELVKDYGWLTILAKPLFWLL), 364–384 (FLGNWGWSIIALTVLIKLVFF), 434–454 (LGGCLPIVIQIPVFIALYWVL), 472–492 (LSVPDPFYILPIVMAVSMFVQ), and 507–527 (VMMIMPLVFSVMFFFFPAGLV).

The protein belongs to the OXA1/ALB3/YidC family. Type 1 subfamily. In terms of assembly, interacts with the Sec translocase complex via SecD. Specifically interacts with transmembrane segments of nascent integral membrane proteins during membrane integration.

Its subcellular location is the cell inner membrane. Its function is as follows. Required for the insertion and/or proper folding and/or complex formation of integral membrane proteins into the membrane. Involved in integration of membrane proteins that insert both dependently and independently of the Sec translocase complex, as well as at least some lipoproteins. Aids folding of multispanning membrane proteins. In Cupriavidus taiwanensis (strain DSM 17343 / BCRC 17206 / CCUG 44338 / CIP 107171 / LMG 19424 / R1) (Ralstonia taiwanensis (strain LMG 19424)), this protein is Membrane protein insertase YidC.